A 538-amino-acid chain; its full sequence is RNA-binding protein Ro60 (538 aa).

Met1 is subject to N-acetylmethionine. Ser4 and Ser19 each carry phosphoserine. Residues Val16–Lys369 form the TROVE domain. Positions Arg120 to Asn284 are RNA-binding. N6-acetyllysine is present on Lys224. The tract at residues Phe361–Ile538 is VWFA-like domain. Residues Ser378, Ser380, and Thr445 each coordinate a divalent metal cation.

Belongs to the Ro 60 kDa family. In terms of assembly, identified in a IGF2BP1-dependent mRNP granule complex containing untranslated mRNAs. Found in a complex with PUF60 and Y5 RNA. Interacts with RAB11FIP5. Highest in brain, followed by lung, muscle, kidney and heart. Lower levels are found in testis, liver and spleen.

Its subcellular location is the cytoplasm. In terms of biological role, RNA-binding protein that binds to misfolded non-coding RNAs, pre-5S rRNA, and several small cytoplasmic RNA molecules known as Y RNAs. May play roles in cilia formation and/or maintenance. In Mus musculus (Mouse), this protein is RNA-binding protein Ro60.